A 117-amino-acid chain; its full sequence is Ribonuclease P protein component (117 aa).

It belongs to the RnpA family. In terms of assembly, consists of a catalytic RNA component (M1 or rnpB) and a protein subunit.

It catalyses the reaction Endonucleolytic cleavage of RNA, removing 5'-extranucleotides from tRNA precursor.. Its function is as follows. RNaseP catalyzes the removal of the 5'-leader sequence from pre-tRNA to produce the mature 5'-terminus. It can also cleave other RNA substrates such as 4.5S RNA. The protein component plays an auxiliary but essential role in vivo by binding to the 5'-leader sequence and broadening the substrate specificity of the ribozyme. The polypeptide is Ribonuclease P protein component (Aliivibrio salmonicida (strain LFI1238) (Vibrio salmonicida (strain LFI1238))).